The chain runs to 670 residues: DNA ligase (670 aa).

NAD(+) is bound by residues 35–39, 84–85, and Glu116; these read DSVYD and SL. Catalysis depends on Lys118, which acts as the N6-AMP-lysine intermediate. 4 residues coordinate NAD(+): Arg139, Glu176, Lys293, and Lys317. Zn(2+) contacts are provided by Cys411, Cys414, Cys429, and Cys435. The BRCT domain maps to 592 to 670; that stretch reads VVKSEIAGKT…EEAFLKLLKS (79 aa).

The protein belongs to the NAD-dependent DNA ligase family. LigA subfamily. Requires Mg(2+) as cofactor. It depends on Mn(2+) as a cofactor.

It carries out the reaction NAD(+) + (deoxyribonucleotide)n-3'-hydroxyl + 5'-phospho-(deoxyribonucleotide)m = (deoxyribonucleotide)n+m + AMP + beta-nicotinamide D-nucleotide.. DNA ligase that catalyzes the formation of phosphodiester linkages between 5'-phosphoryl and 3'-hydroxyl groups in double-stranded DNA using NAD as a coenzyme and as the energy source for the reaction. It is essential for DNA replication and repair of damaged DNA. The protein is DNA ligase of Coxiella burnetii (strain RSA 331 / Henzerling II).